A 418-amino-acid polypeptide reads, in one-letter code: MYKKIKLRDQQISELINLESKRQNSQIELIASENYASEDVILANGTSLSNKYGEGYPGKRYYGGCTFIDQIEKIAIERVKKLFKIEYANVQPYSGSSANAAVFAALLKPGDKILGLDLNAGGHLSHGYKINFSGMFYSGISYFLDENELLDYDAIEKIALKTKPNLIICGYSAYSRKIDFARFRQIADKVNAFLLADIAHIAGLIAAGQHPSPVGYAHIITSTTQKTLRGPRGGLILTNSKEIAAKIDKVVFPGIQGGPFFHTIAAKAVAFKEALEPWFKEYCAQIVKNASHFASEFIKKGIRIVSQGTENHLFTIDVLSSYNLNGKQAQILLESVNIITNKNTIPNDTLSPFVTSGLRLGTPAMTSRGFKEQEFSQMAEIIDFVLRKKELNALEIKEIKKKVKILTKNFPIKKSYWP.

(6S)-5,6,7,8-tetrahydrofolate is bound by residues L118 and 122–124 (GHL). An N6-(pyridoxal phosphate)lysine modification is found at K226. Residue 351 to 353 (SPF) coordinates (6S)-5,6,7,8-tetrahydrofolate.

This sequence belongs to the SHMT family. In terms of assembly, homodimer. The cofactor is pyridoxal 5'-phosphate.

It is found in the cytoplasm. The catalysed reaction is (6R)-5,10-methylene-5,6,7,8-tetrahydrofolate + glycine + H2O = (6S)-5,6,7,8-tetrahydrofolate + L-serine. The protein operates within one-carbon metabolism; tetrahydrofolate interconversion. Catalyzes the reversible interconversion of serine and glycine with tetrahydrofolate (THF) serving as the one-carbon carrier. This reaction serves as the major source of one-carbon groups required for the biosynthesis of purines, thymidylate, methionine, and other important biomolecules. The polypeptide is Probable serine hydroxymethyltransferase (Mesomycoplasma hyopneumoniae (strain 232) (Mycoplasma hyopneumoniae)).